A 273-amino-acid polypeptide reads, in one-letter code: Peptidyl-prolyl cis-trans isomerase E (273 aa).

The 48-residue stretch at 1-48 folds into the RRM domain; that stretch reads MPMDYQTEKHRGFAFVEFEEVEDAMSAIDNMNESEIFGRTIRVNVARP. The disordered stretch occupies residues 77-103; the sequence is RKLDEPDIVNPSDTSENVEDLSDEEMR. The PPIase cyclophilin-type domain maps to 115-271; that stretch reads FFDIRIGNGD…EPVIISRCGE (157 aa).

It belongs to the cyclophilin-type PPIase family. PPIase E subfamily.

It is found in the cytoplasm. The catalysed reaction is [protein]-peptidylproline (omega=180) = [protein]-peptidylproline (omega=0). With respect to regulation, binds cyclosporin A (CsA). CsA mediates some of its effects via an inhibitory action on PPIase. Functionally, PPIases accelerate the folding of proteins. It catalyzes the cis-trans isomerization of proline imidic peptide bonds in oligopeptides. This Schistosoma mansoni (Blood fluke) protein is Peptidyl-prolyl cis-trans isomerase E.